Here is a 1065-residue protein sequence, read N- to C-terminus: Probable arabinosyltransferase B (1065 aa).

12 helical membrane-spanning segments follow: residues 15–37 (WVATIAGLIGFVLSVATPLLPVV), 204–226 (LKLAAMVTAILATIVALVALWRL), 241–263 (NWRTFTLADVAVIFGFVLWHVIG), 394–413 (YSRLTPAALAVITAAFTLGV), 417–436 (GLIAVAALVAGGRPILRILV), 441–463 (VVGTWPLVAPMLAAGTVILTVVF), 510–527 (FGFLITALCLFTAVFIML), 540–557 (AWRLMGVIFGTMFFLMFT), 567–589 (LFAAVGAAMAALTTVLVSPAVLG), 596–618 (AFLAALLFMMALCFATTNGWWYV), 633–655 (GGITVSTVFFSMFVAAALYAIWL), and 667–689 (LARALTAAPVPLAAGFMALVFIA).

It belongs to the emb family.

It is found in the cell membrane. In terms of biological role, arabinosyl transferase responsible for the polymerization of arabinose into the arabinan of arabinogalactan. The protein is Probable arabinosyltransferase B (embB) of Mycobacterium avium.